The sequence spans 178 residues: Large ribosomal subunit protein eL20 (178 aa).

This sequence belongs to the eukaryotic ribosomal protein eL20 family.

This is Large ribosomal subunit protein eL20 (RPL18A) from Oryza sativa subsp. japonica (Rice).